A 537-amino-acid chain; its full sequence is Chaperonin GroEL (537 aa).

Residues 30–33 (TLGP), 87–91 (DGTTT), glycine 414, 477–479 (DAV), and aspartate 493 each bind ATP.

This sequence belongs to the chaperonin (HSP60) family. Forms a cylinder of 14 subunits composed of two heptameric rings stacked back-to-back. Interacts with the co-chaperonin GroES.

It localises to the cytoplasm. The catalysed reaction is ATP + H2O + a folded polypeptide = ADP + phosphate + an unfolded polypeptide.. In terms of biological role, together with its co-chaperonin GroES, plays an essential role in assisting protein folding. The GroEL-GroES system forms a nano-cage that allows encapsulation of the non-native substrate proteins and provides a physical environment optimized to promote and accelerate protein folding. The protein is Chaperonin GroEL of Coprothermobacter proteolyticus (strain ATCC 35245 / DSM 5265 / OCM 4 / BT).